The chain runs to 52 residues: UPF0391 membrane protein Avin_10980 (52 aa).

Transmembrane regions (helical) follow at residues 4 to 24 (WSIIFLVVAIIAGLLGFGGIA) and 29 to 49 (GIAKILFALFLILFVVSLLFG).

This sequence belongs to the UPF0391 family.

The protein resides in the cell membrane. The sequence is that of UPF0391 membrane protein Avin_10980 from Azotobacter vinelandii (strain DJ / ATCC BAA-1303).